The sequence spans 86 residues: Large ribosomal subunit protein bL27 (86 aa).

Residues 1-24 (MAHKKAMGSTENTRDSNPSYLGVK) form a disordered region. The span at 9–19 (STENTRDSNPS) shows a compositional bias: polar residues.

This sequence belongs to the bacterial ribosomal protein bL27 family.

In Salinibacter ruber (strain DSM 13855 / M31), this protein is Large ribosomal subunit protein bL27.